The following is a 498-amino-acid chain: ATP synthase subunit beta, chloroplastic (498 aa).

Residue 172 to 179 (GGAGVGKT) participates in ATP binding.

Belongs to the ATPase alpha/beta chains family. In terms of assembly, F-type ATPases have 2 components, CF(1) - the catalytic core - and CF(0) - the membrane proton channel. CF(1) has five subunits: alpha(3), beta(3), gamma(1), delta(1), epsilon(1). CF(0) has four main subunits: a(1), b(1), b'(1) and c(9-12).

It is found in the plastid. The protein localises to the chloroplast thylakoid membrane. The enzyme catalyses ATP + H2O + 4 H(+)(in) = ADP + phosphate + 5 H(+)(out). Functionally, produces ATP from ADP in the presence of a proton gradient across the membrane. The catalytic sites are hosted primarily by the beta subunits. This is ATP synthase subunit beta, chloroplastic from Nicotiana tabacum (Common tobacco).